The chain runs to 341 residues: Basic membrane protein D (341 aa).

Residues 1–16 form the signal peptide; sequence MLKKVYYFLIFLFIVA. The N-palmitoyl cysteine moiety is linked to residue C17. Residue C17 is the site of S-diacylglycerol cysteine attachment.

It belongs to the BMP lipoprotein family. In terms of assembly, monomer.

It localises to the cell inner membrane. Its function is as follows. Binds adenosine and inosine. May be part of an ABC-type nucleoside uptake system involved in the purine salvage pathway. In Borreliella burgdorferi (strain JD1) (Borrelia burgdorferi), this protein is Basic membrane protein D.